Consider the following 270-residue polypeptide: Aliphatic sulfonates import ATP-binding protein SsuB 3 (270 aa).

Positions 17–238 constitute an ABC transporter domain; it reads LAVQNLKKAF…ARGSHRLAAL (222 aa). 49 to 56 serves as a coordination point for ATP; it reads GRSGCGKS.

This sequence belongs to the ABC transporter superfamily. Aliphatic sulfonates importer (TC 3.A.1.17.2) family. The complex is composed of two ATP-binding proteins (SsuB), two transmembrane proteins (SsuC) and a solute-binding protein (SsuA).

Its subcellular location is the cell inner membrane. The enzyme catalyses ATP + H2O + aliphatic sulfonate-[sulfonate-binding protein]Side 1 = ADP + phosphate + aliphatic sulfonateSide 2 + [sulfonate-binding protein]Side 1.. In terms of biological role, part of the ABC transporter complex SsuABC involved in aliphatic sulfonates import. Responsible for energy coupling to the transport system. The protein is Aliphatic sulfonates import ATP-binding protein SsuB 3 of Pseudomonas syringae pv. tomato (strain ATCC BAA-871 / DC3000).